The primary structure comprises 748 residues: Putative transmembrane protein ORF88 (748 aa).

Residues 1–20 (MIIMKSIILLLAWFLTKTQA) form the signal peptide. At 21 to 723 (NMLTESLYLS…LNLAPFKTLS (703 aa)) the chain is on the extracellular side. Residues asparagine 55, asparagine 78, asparagine 99, asparagine 152, asparagine 189, asparagine 390, asparagine 467, and asparagine 499 are each glycosylated (N-linked (GlcNAc...) asparagine; by host). Residues 531-574 (LTFDSPPPPPTTTQAPPPPPTTTQAPPPPPTTTQAPPPPIVINT) form a disordered region. The segment covering 535–570 (SPPPPPTTTQAPPPPPTTTQAPPPPPTTTQAPPPPI) has biased composition (pro residues). Asparagine 573, asparagine 584, asparagine 599, asparagine 612, and asparagine 617 each carry an N-linked (GlcNAc...) asparagine; by host glycan. Residues 650 to 680 (PSIGRAPIPPPDVPVEPPRSIPTTNAPSPEE) are disordered. A compositionally biased stretch (pro residues) spans 656–669 (PIPPPDVPVEPPRS). Residues 724–744 (YAGIGVVSFALLFTILVVCLI) form a helical membrane-spanning segment. Over 745 to 748 (KFSI) the chain is Cytoplasmic.

The protein resides in the host membrane. This Magallana gigas (Pacific oyster) protein is Putative transmembrane protein ORF88.